The chain runs to 173 residues: Putative metal-dependent hydrolase BcerKBAB4_2443 (173 aa).

Residues His65, His156, and His160 each coordinate Zn(2+).

Belongs to the metal hydrolase YfiT family. In terms of assembly, homodimer. Zn(2+) serves as cofactor.

Its subcellular location is the cytoplasm. Functionally, possible metal-dependent hydrolase. The chain is Putative metal-dependent hydrolase BcerKBAB4_2443 from Bacillus mycoides (strain KBAB4) (Bacillus weihenstephanensis).